The sequence spans 735 residues: Rho GTPase-activating protein SYDE1 (735 aa).

The interval 1–253 (MAEPLLRKTF…SPTSFRPYEV (253 aa)) is disordered. Basic and acidic residues predominate over residues 14 to 31 (RGREKLPRKKSDAKERGH). Positions 35 to 46 (RPEPSPPEPEPQ) are enriched in pro residues. Residues 47–71 (APEGSQAGAEGPSSPEASRSPARGA) are compositionally biased toward low complexity. Residues 122–131 (PPAPEPPGPQ) show a composition bias toward pro residues. Over residues 211–221 (GGPGPAAGPGG) the composition is skewed to gly residues. Phosphoserine is present on residues Ser224, Ser231, Ser235, and Ser244. The C2 domain occupies 249-366 (RPYEVGPAAR…FRGCQAQQLA (118 aa)). The Rho-GAP domain maps to 398 to 604 (LPLPLLVERE…YLLQSWPDPR (207 aa)). Ser575 is subject to Phosphoserine. Disordered regions lie at residues 608–651 (QSPD…SNRY) and 674–696 (DYDH…PRVT). Ser681 and Ser683 each carry phosphoserine.

Post-translationally, palmitoylated. Probably palmitoylated by ZDHHC3 and ZDHHC7. In terms of tissue distribution, expressed in trophoblast cells of placental villi.

GTPase activator for the Rho-type GTPases. As a GCM1 downstream effector, it is involved in placental development and positively regulates trophoblast cells migration. It regulates cytoskeletal remodeling by controlling the activity of Rho GTPases including RHOA, CDC42 and RAC1. The sequence is that of Rho GTPase-activating protein SYDE1 (SYDE1) from Homo sapiens (Human).